The sequence spans 429 residues: Nocturnin (429 aa).

A mitochondrion-targeting transit peptide spans Met-1–Tyr-73. The disordered stretch occupies residues Arg-21–Gly-68. Glu-193 contacts Mg(2+). Substrate contacts are provided by residues Glu-193, Lys-217–Trp-219, Asn-261, His-284–Ala-287, and Asp-322–Asn-324. Residues Asn-341–Pro-351 are interaction with PPARG. Position 412 (His-412) interacts with substrate.

This sequence belongs to the CCR4/nocturin family. As to quaternary structure, interacts with PPARG. The cofactor is Mg(2+). Highly expressed in the differentiated adipocyte (at protein level). Ubiquitous.

It is found in the cytoplasm. Its subcellular location is the nucleus. The protein localises to the perinuclear region. It localises to the mitochondrion. It catalyses the reaction NADP(+) + H2O = phosphate + NAD(+). The catalysed reaction is NADPH + H2O = phosphate + NADH. Functionally, phosphatase which catalyzes the conversion of NADP(+) to NAD(+) and of NADPH to NADH. Shows a small preference for NADPH over NADP(+). Represses translation and promotes degradation of target mRNA molecules. Plays an important role in post-transcriptional regulation of metabolic genes under circadian control. Exerts a rhythmic post-transcriptional control of genes necessary for metabolic functions including nutrient absorption, glucose/insulin sensitivity, lipid metabolism, adipogenesis, inflammation and osteogenesis. Plays an important role in favoring adipogenesis over osteoblastogenesis and acts as a key regulator of the adipogenesis/osteogenesis balance. Promotes adipogenesis by facilitating PPARG nuclear translocation which activates its transcriptional activity. Regulates circadian expression of NOS2 in the liver and negatively regulates the circadian expression of IGF1 in the bone. Critical for proper development of early embryos. The sequence is that of Nocturnin from Mus musculus (Mouse).